A 267-amino-acid polypeptide reads, in one-letter code: MEAKMNLHVCALALLLFGSIATVRGRAVDLVDDSNDVDNSIEAEEEKPRNRAFEADWLKFTKTPPTKLQQADGATIEIVCEMMGSQVPSIQWVVGHLPRSELDDLDSNQVAEEAPSAIVRVRSSHIIDHVLSEARTYTCVGRTGSKTIYASTVVHPPRSSRLTPEKTYPGAQKPRIIYTEKTHLDLMGSNIQLPCRVHARPRAEITWLNNENKEIVQGHRHRVLANGDLLISEIKWEDMGNYKCIARNVVGKDTADTFVYPVLNEED.

A signal peptide spans 1–25 (MEAKMNLHVCALALLLFGSIATVRG). Ig-like C2-type domains are found at residues 48–149 (PRNR…KTIY) and 174–260 (PRII…TFVY). 2 disulfides stabilise this stretch: Cys-80/Cys-139 and Cys-195/Cys-244.

As to expression, detected in several sites including the ventral neuroectoderm, the tracheal pits, the pharynx and esophagus, and specific neuronal cell bodies, where it is primarily expressed.

It is found in the secreted. Its subcellular location is the extracellular space. Essential developmental role during embryogenesis, in particular the normal development of the nervous system. May be involved in some aspect of cell adhesion. The protein is Neural/ectodermal development factor IMP-L2 (ImpL2) of Drosophila melanogaster (Fruit fly).